We begin with the raw amino-acid sequence, 98 residues long: MKTLVLVAVLGLASLYLLSYASEVQQLSRDEEEFRALVASFGGLFDTEERGVDKEGCRKLFGGCVGDGDCCLHLGCKTRKLPPFADPYCAWDWTFGRK.

Residues 1–21 (MKTLVLVAVLGLASLYLLSYA) form the signal peptide. Positions 22–50 (SEVQQLSRDEEEFRALVASFGGLFDTEER) are excised as a propeptide. Cystine bridges form between Cys57/Cys71, Cys64/Cys76, and Cys70/Cys89.

It belongs to the neurotoxin 10 (Hwtx-1) family. 25 (ICK4) subfamily. In terms of tissue distribution, expressed by the venom gland.

It is found in the secreted. In terms of biological role, ion channel inhibitor. The sequence is that of U11-barytoxin-Tl1b from Trittame loki (Brush-footed trapdoor spider).